The sequence spans 205 residues: uncharacterized protein (205 aa).

A helical transmembrane segment spans residues Ile5–Tyr27.

This sequence to T.maritima TM1570.

Its subcellular location is the membrane. This is an uncharacterized protein from Aquifex aeolicus (strain VF5).